The sequence spans 1484 residues: Chromosome partition protein MukB (1484 aa).

Gly-34–Ser-41 is a binding site for ATP. Coiled-coil stretches lie at residues Leu-326 to Gln-418, Leu-444 to His-472, and Arg-509 to Pro-602. The segment at Pro-666–Arg-783 is flexible hinge. Coiled-coil stretches lie at residues Glu-835–Glu-923, Glu-977–Gly-1116, and Val-1209–Val-1265. The tract at residues Ala-1049–Arg-1074 is disordered. Residues Ser-1051 to His-1065 show a composition bias toward basic and acidic residues.

Belongs to the SMC family. MukB subfamily. Homodimerization via its hinge domain. Binds to DNA via its C-terminal region. Interacts, and probably forms a ternary complex, with MukE and MukF via its C-terminal region. The complex formation is stimulated by calcium or magnesium. Interacts with tubulin-related protein FtsZ.

It localises to the cytoplasm. Its subcellular location is the nucleoid. Plays a central role in chromosome condensation, segregation and cell cycle progression. Functions as a homodimer, which is essential for chromosome partition. Involved in negative DNA supercoiling in vivo, and by this means organize and compact chromosomes. May achieve or facilitate chromosome segregation by condensation DNA from both sides of a centrally located replisome during cell division. The chain is Chromosome partition protein MukB from Salmonella dublin (strain CT_02021853).